A 310-amino-acid polypeptide reads, in one-letter code: Phytoene synthase 2, chloroplastic (310 aa).

A chloroplast-targeting transit peptide spans 1 to 25; that stretch reads DPDIVLPGNLGLLSEAYDRCGEVCA.

Belongs to the phytoene/squalene synthase family. Monomer.

The protein localises to the plastid. Its subcellular location is the chloroplast. The enzyme catalyses 2 (2E,6E,10E)-geranylgeranyl diphosphate = 15-cis-phytoene + 2 diphosphate. The protein operates within carotenoid biosynthesis; phytoene biosynthesis; all-trans-phytoene from geranylgeranyl diphosphate: step 1/1. In terms of biological role, catalyzes the reaction from prephytoene diphosphate to phytoene. This is Phytoene synthase 2, chloroplastic (PSY2) from Solanum lycopersicum (Tomato).